Consider the following 431-residue polypeptide: RbAp48-related WD40 repeat-containing protein prw1 (431 aa).

WD repeat units follow at residues 127-159 (SHPE…LVFD), 182-213 (KHTQ…SCWD), 232-263 (SHEK…HVHD), 279-310 (AHSG…ALWD), 323-354 (GHED…LVWD), and 380-411 (GHTS…QIWT).

It belongs to the WD repeat HIR1 family. Heterotetramer of alp13, clr6, prw1 and pst2.

It localises to the nucleus. Its function is as follows. Has a role in chromatin assembly and chromosome segregation. Involved in the deacetylation of histones. The chain is RbAp48-related WD40 repeat-containing protein prw1 (prw1) from Schizosaccharomyces pombe (strain 972 / ATCC 24843) (Fission yeast).